The sequence spans 448 residues: Proline-rich protein 4 (448 aa).

Residues 1–29 form the signal peptide; the sequence is MRILPEPRGSVPCLLLLVSVLLSATLSLA. 46 repeat units span residues 152-156, 157-161, 165-169, 170-174, 175-179, 183-187, 188-193, 194-198, 201-205, 208-212, 216-220, 222-226, 227-231, 232-236, 238-242, 245-249, 250-254, 256-259, 260-264, 265-270, 271-278, 279-284, 286-294, 295-299, 300-304, 306-311, 314-320, 321-327, 328-334, 335-341, 342-348, 349-356, 357-363, 364-368, 369-374, 378-384, 385-389, 390-394, 395-402, 403-407, 409-413, 414-419, 420-424, 425-429, 430-434, and 442-446. The 46 X 5 AA approximate repeats stretch occupies residues 152–446; the sequence is PMPKLPPFKG…KFGKWPPLPP (295 aa). Positions 240-290 are enriched in pro residues; it reads PIPKKPCPPKPPKIEHPPPVPVYKPPPKIEKPPPVPVYKPPPKIEHPPPVP. The interval 240–345 is disordered; sequence PIPKKPCPPK…PPKIVIPPPK (106 aa). Pro residues-rich tracts occupy residues 306–319 and 327–345; these read PPPVPVHKPPTKKP and PPPVPVHKPPPKIVIPPPK.

Belongs to the plant proline-rich protein superfamily. In terms of tissue distribution, mostly expressed in aerial organs, particularly in expanding leaves, stems, flowers, and siliques. Also present in stipules.

It localises to the secreted. The protein resides in the cell wall. The sequence is that of Proline-rich protein 4 (PRP4) from Arabidopsis thaliana (Mouse-ear cress).